We begin with the raw amino-acid sequence, 218 residues long: Large ribosomal subunit protein uL3 (218 aa).

Belongs to the universal ribosomal protein uL3 family. As to quaternary structure, part of the 50S ribosomal subunit. Forms a cluster with proteins L14 and L19.

Its function is as follows. One of the primary rRNA binding proteins, it binds directly near the 3'-end of the 23S rRNA, where it nucleates assembly of the 50S subunit. The polypeptide is Large ribosomal subunit protein uL3 (Corynebacterium jeikeium (strain K411)).